A 216-amino-acid polypeptide reads, in one-letter code: MISFIKGVLIEKDPTALLIDVNGIGYEVFVPMTTFYTLGDIDSQVSLYTHFVVREDAQQLYGFKSKVDKKVFQELIKVNGIGARTAIAILSGMDSKTLLHCIENKDYALLATVPGIGKKTAERLVIEIYDKLLKMANEIYAQTSGTTTTSQDSQAQQAPTSVVLANSIFNESVDALLALGYKQKDAEKMARSAMGDATTAAEVIRKALQGSIKSKR.

A domain I region spans residues 1 to 64 (MISFIKGVLI…EDAQQLYGFK (64 aa)). The interval 65-143 (SKVDKKVFQE…KMANEIYAQT (79 aa)) is domain II. Positions 144 to 163 (SGTTTTSQDSQAQQAPTSVV) are flexible linker. The tract at residues 164–216 (LANSIFNESVDALLALGYKQKDAEKMARSAMGDATTAAEVIRKALQGSIKSKR) is domain III.

It belongs to the RuvA family. In terms of assembly, homotetramer. Forms an RuvA(8)-RuvB(12)-Holliday junction (HJ) complex. HJ DNA is sandwiched between 2 RuvA tetramers; dsDNA enters through RuvA and exits via RuvB. An RuvB hexamer assembles on each DNA strand where it exits the tetramer. Each RuvB hexamer is contacted by two RuvA subunits (via domain III) on 2 adjacent RuvB subunits; this complex drives branch migration. In the full resolvosome a probable DNA-RuvA(4)-RuvB(12)-RuvC(2) complex forms which resolves the HJ.

Its subcellular location is the cytoplasm. Functionally, the RuvA-RuvB-RuvC complex processes Holliday junction (HJ) DNA during genetic recombination and DNA repair, while the RuvA-RuvB complex plays an important role in the rescue of blocked DNA replication forks via replication fork reversal (RFR). RuvA specifically binds to HJ cruciform DNA, conferring on it an open structure. The RuvB hexamer acts as an ATP-dependent pump, pulling dsDNA into and through the RuvAB complex. HJ branch migration allows RuvC to scan DNA until it finds its consensus sequence, where it cleaves and resolves the cruciform DNA. The protein is Holliday junction branch migration complex subunit RuvA of Francisella tularensis subsp. mediasiatica (strain FSC147).